The following is a 194-amino-acid chain: Holliday junction branch migration complex subunit RuvA (194 aa).

Positions 1–64 are domain I; sequence MISRLTGKLV…EDAHLLFGFA (64 aa). The interval 65 to 143 is domain II; the sequence is TAEERKTFRQ…AHTVTDGLFA (79 aa). Residues 144–147 are flexible linker; it reads ASPA. The segment at 147 to 194 is domain III; that stretch reads AADETEDIVSTLLALGYNEREAKAAVKGVPKGTDVGEGVRLALKNLLK.

It belongs to the RuvA family. As to quaternary structure, homotetramer. Forms an RuvA(8)-RuvB(12)-Holliday junction (HJ) complex. HJ DNA is sandwiched between 2 RuvA tetramers; dsDNA enters through RuvA and exits via RuvB. An RuvB hexamer assembles on each DNA strand where it exits the tetramer. Each RuvB hexamer is contacted by two RuvA subunits (via domain III) on 2 adjacent RuvB subunits; this complex drives branch migration. In the full resolvosome a probable DNA-RuvA(4)-RuvB(12)-RuvC(2) complex forms which resolves the HJ.

The protein resides in the cytoplasm. The RuvA-RuvB-RuvC complex processes Holliday junction (HJ) DNA during genetic recombination and DNA repair, while the RuvA-RuvB complex plays an important role in the rescue of blocked DNA replication forks via replication fork reversal (RFR). RuvA specifically binds to HJ cruciform DNA, conferring on it an open structure. The RuvB hexamer acts as an ATP-dependent pump, pulling dsDNA into and through the RuvAB complex. HJ branch migration allows RuvC to scan DNA until it finds its consensus sequence, where it cleaves and resolves the cruciform DNA. The chain is Holliday junction branch migration complex subunit RuvA from Neisseria gonorrhoeae (strain ATCC 700825 / FA 1090).